A 218-amino-acid polypeptide reads, in one-letter code: Cytochrome b6 (218 aa).

The helical transmembrane segment at 35-55 threads the bilayer; it reads IFYCLGGITLVCFLIQFATGF. Cys-38 contacts heme c. His-89 and His-103 together coordinate heme b. A run of 3 helical transmembrane segments spans residues 93-113, 119-139, and 189-209; these read ASMM…TGGF, LTWV…VTGY, and LHTF…FLMI. The heme b site is built by His-190 and His-205.

This sequence belongs to the cytochrome b family. PetB subfamily. In terms of assembly, the 4 large subunits of the cytochrome b6-f complex are cytochrome b6, subunit IV (17 kDa polypeptide, PetD), cytochrome f and the Rieske protein, while the 4 small subunits are PetG, PetL, PetM and PetN. The complex functions as a dimer. The cofactor is heme b. Requires heme c as cofactor.

It localises to the cellular thylakoid membrane. Component of the cytochrome b6-f complex, which mediates electron transfer between photosystem II (PSII) and photosystem I (PSI), cyclic electron flow around PSI, and state transitions. This chain is Cytochrome b6, found in Synechococcus sp. (strain CC9902).